The primary structure comprises 593 residues: Tyrosine-protein phosphatase non-receptor type 11 (593 aa).

An N-acetylthreonine modification is found at Thr-2. SH2 domains are found at residues 6–102 and 112–216; these read WFHP…KYPL and WFHG…KQPL. A phosphotyrosine mark is found at Tyr-62 and Tyr-66. The Tyrosine-protein phosphatase domain maps to 247–521; it reads FWEEFETLQQ…RFIYMAVQHY (275 aa). Substrate-binding positions include Asp-425, 459 to 465, and Gln-506; that span reads CSAGIGR. The active-site Phosphocysteine intermediate is Cys-459. 2 positions are modified to phosphotyrosine; by PDGFR: Tyr-542 and Tyr-580.

This sequence belongs to the protein-tyrosine phosphatase family. Non-receptor class 2 subfamily. As to quaternary structure, interacts with CD84 and with phosphorylated SIT1 and MZPL1. Interacts with FCRL4, FCRL6 and ANKHD1. Interacts with GAREM1 (tyrosine phosphorylated); the interaction increases MAPK/ERK activity and does not affect the GRB2/SOS complex formation. Interacts with PTPNS1 and BCAR3. Interacts with phosphorylated LIME1. Interacts with SHB and INPP5D/SHIP1. Interacts with KIR2DL1; the interaction is enhanced by ARRB2. Interacts with GAB2. Interacts with TERT; the interaction retains TERT in the nucleus. Interacts with PECAM1 and FER. Interacts with EPHA2 (activated); participates in PTK2/FAK1 dephosphorylation in EPHA2 downstream signaling. Interacts with MILR1 (tyrosine phosphorylated). Interacts with FLT1 (tyrosine-phosphorylated), FLT3 (tyrosine-phosphorylated), FLT4 (tyrosine-phosphorylated), KIT and GRB2. Interacts with ROS1; mediates PTPN11 phosphorylation. Interacts with PDGFRA (tyrosine phosphorylated). Interacts with PDGFRB (tyrosine phosphorylated); this interaction increases the PTPN11 phosphatase activity. Interacts (via SH2 domain) with TEK/TIE2 (tyrosine phosphorylated). Interacts with CEACAM1 (via cytoplasmic domain); this interaction depends on the monomer/dimer equilibrium and is phosphorylation-dependent. Interacts with MPIG6B (via ITIM motif). Interacts with SIGLEC10. Interacts with Lilrb4a (when tyrosine phosphorylated). Interacts with SIGLEC10. Interacts with CLEC12B (via ITIM motif); this interaction triggers dephosphorylation and activation of PTPN11. Interacts (via SH2 domains) with NEDD9/CAS-L; the interaction is enhanced when NEDD9/CAS-L is tyrosine phosphorylated. Interacts with PIRB; when PIRB is phosphorylated by LYN at 'Tyr-794' and 'Tyr-824'. Phosphorylated on Tyr-542 and Tyr-580 upon receptor protein tyrosine kinase activation; which creates a binding site for GRB2 and other SH2-containing proteins. Phosphorylated upon activation of the receptor-type kinase FLT3. Phosphorylated by activated PDGFRB. Phosphorylated upon activation of the receptor-type kinase PDGFRA. As to expression, highly expressed in brain, heart and kidney.

The protein resides in the cytoplasm. The catalysed reaction is O-phospho-L-tyrosyl-[protein] + H2O = L-tyrosyl-[protein] + phosphate. In terms of biological role, acts downstream of various receptor and cytoplasmic protein tyrosine kinases to participate in the signal transduction from the cell surface to the nucleus. Positively regulates MAPK signal transduction pathway. Dephosphorylates GAB1, ARHGAP35 and EGFR. Dephosphorylates ROCK2 at 'Tyr-722' resulting in stimulation of its RhoA binding activity. Dephosphorylates CDC73. Dephosphorylates SOX9 on tyrosine residues, leading to inactivate SOX9 and promote ossification. Dephosphorylates tyrosine-phosphorylated NEDD9/CAS-L. In Mus musculus (Mouse), this protein is Tyrosine-protein phosphatase non-receptor type 11 (Ptpn11).